Consider the following 412-residue polypeptide: MTTTTTKAIILVGGPSKGTRFRPLSLDVPKLLFPIAGKPMIYHHIEACSKVENMKEIILIGFFQESVLSKFISETSKQLNVAIRYINEEKVLGTAGGLYHFRDIILEGGPSEIFVLHSDICCAFPLNDLLQFHKQHGRSCTIMGTEIESAYANQYGCLVRDEKTAELLHYAEKPETFVSNLINCGVYCFSPQFFDVIGKTMIDLKTSGQNITTDYPEITRKGFDVERLRLEQDIFVPLAGTGFISVYPYVGFWRQIKNAGSSVYCQELYLNHFAKTKPEVLKKGNNIIGNVIIDSTASVDPSAIIGPDVYIGPNVKIGKGVRVIHSIILDQTEIKDHACIIYSIIGWQSLIGVWARIEGIPNYTPFLYSQDKRRGVTIFGAGAQANGEIIVSNCIVMPHKQLDRNYNNEIIL.

The substrate-binding domain stretch occupies residues 6-259 (TKAIILVGGP…VGFWRQIKNA (254 aa)). Glu88 and Gln255 together coordinate GDP-alpha-D-mannose. The interval 281–412 (LKKGNNIIGN…DRNYNNEIIL (132 aa)) is hexapeptide repeat domain.

This sequence belongs to the transferase hexapeptide repeat family. In terms of assembly, component of the GMPPA-GMPPB mannose-1-phosphate guanylyltransferase complex composed of 4 gmppA subunits and 8 gmppB subunits; the complex is organized into three layers, a central layer made up of 2 gmppA dimers sandwiched between two layers each made up of 2 gmppB dimers.

In terms of biological role, regulatory subunit of the GMPPA-GMPPB mannose-1-phosphate guanylyltransferase complex; reduces the catalytic activity of GMPPB when part of the complex. Mediates allosteric feedback inhibition of GMPPB catalytic activity upon binding GDP-alpha-D-mannose. Together with GMPPB regulates GDP-alpha-D-mannose levels. In Dictyostelium discoideum (Social amoeba), this protein is Mannose-1-phosphate guanylyltransferase regulatory subunit alpha (gmppA).